The chain runs to 339 residues: MSGQLERCEREWHELEGEFQELQETHRIYKQKLEELAALQTLCSSSISKQKKHLKDLKLTLQRCKRHASREEAELVQQMAANIKERQDVFFDMEAYLPKKNGLYLNLVLGNVNVTLLSNQAKFAYKDEYEKFKLYLTIILLLGAVACRFVLHYRVTDEVFNFLLVWYYCTLTIRESILISNGSRIKGWWVSHHYVSTFLSGVMLTWPNGPIYQKFRNQFLAFSIFQSCVQFLQYYYQRGCLYRLRALGERNHLDLTVEGFQSWMWRGLTFLLPFLFCGHFWQLYNAVTLFELSSHEECREWQVFVLAFTFLILFLGNFLTTLKVVHAKLQKNRGKTKQP.

The stretch at 1 to 77 (MSGQLERCER…ASREEAELVQ (77 aa)) forms a coiled coil. 6 consecutive transmembrane segments (helical) span residues 102–124 (GLYL…AKFA), 132–152 (FKLY…FVLH), 159–179 (VFNF…SILI), 187–207 (GWWV…LTWP), 270–290 (FLLP…VTLF), and 302–322 (QVFV…LTTL).

This sequence belongs to the TMEM120 family. Heterooligomer with TMEM120A.

The protein resides in the nucleus inner membrane. Necessary for efficient adipogenesis. Does not show ion channel activity. This is Transmembrane protein 120B from Homo sapiens (Human).